An 80-amino-acid polypeptide reads, in one-letter code: UPF0180 protein GK1051 (80 aa).

The protein belongs to the UPF0180 family.

This Geobacillus kaustophilus (strain HTA426) protein is UPF0180 protein GK1051.